Consider the following 132-residue polypeptide: Small ribosomal subunit protein uS13 (132 aa).

Residues 106 to 132 form a disordered region; sequence PVRGQVTQKNARTRKGPRKTVAGKKGK. Positions 116–132 are enriched in basic residues; that stretch reads ARTRKGPRKTVAGKKGK.

This sequence belongs to the universal ribosomal protein uS13 family. As to quaternary structure, part of the 30S ribosomal subunit. Forms a loose heterodimer with protein S19. Forms two bridges to the 50S subunit in the 70S ribosome.

Functionally, located at the top of the head of the 30S subunit, it contacts several helices of the 16S rRNA. In the 70S ribosome it contacts the 23S rRNA (bridge B1a) and protein L5 of the 50S subunit (bridge B1b), connecting the 2 subunits; these bridges are implicated in subunit movement. Contacts the tRNAs in the A and P-sites. The sequence is that of Small ribosomal subunit protein uS13 from Mycoplasmopsis pulmonis (strain UAB CTIP) (Mycoplasma pulmonis).